The primary structure comprises 473 residues: Photosystem II CP43 reaction center protein (473 aa).

Positions 1-14 are excised as a propeptide; it reads MKTLYSLRRFYPVE. An N-acetylthreonine modification is found at Thr15. Thr15 is modified (phosphothreonine). Transmembrane regions (helical) follow at residues 69 to 93, 134 to 155, 178 to 200, 255 to 275, and 291 to 312; these read LFEVAHFVPEKPMYEQGLILLPHLA, LLGPETLEESFPFFGYVWKDRN, KALYFGGVYDTWAPGGGDVRKIT, KPFAWARRALVWSGEAYLSYS, and WFNNTAYPSEFYGPTGPEASQA. Glu367 provides a ligand contact to [CaMn4O5] cluster. Residues 447-471 traverse the membrane as a helical segment; the sequence is RARAAAAGFEKGIDRDFEPVLFMTP.

The protein belongs to the PsbB/PsbC family. PsbC subfamily. PSII is composed of 1 copy each of membrane proteins PsbA, PsbB, PsbC, PsbD, PsbE, PsbF, PsbH, PsbI, PsbJ, PsbK, PsbL, PsbM, PsbT, PsbX, PsbY, PsbZ, Psb30/Ycf12, at least 3 peripheral proteins of the oxygen-evolving complex and a large number of cofactors. It forms dimeric complexes. It depends on Binds multiple chlorophylls and provides some of the ligands for the Ca-4Mn-5O cluster of the oxygen-evolving complex. It may also provide a ligand for a Cl- that is required for oxygen evolution. PSII binds additional chlorophylls, carotenoids and specific lipids. as a cofactor.

The protein resides in the plastid. It localises to the chloroplast thylakoid membrane. Functionally, one of the components of the core complex of photosystem II (PSII). It binds chlorophyll and helps catalyze the primary light-induced photochemical processes of PSII. PSII is a light-driven water:plastoquinone oxidoreductase, using light energy to abstract electrons from H(2)O, generating O(2) and a proton gradient subsequently used for ATP formation. The chain is Photosystem II CP43 reaction center protein from Cucumis sativus (Cucumber).